Reading from the N-terminus, the 264-residue chain is uncharacterized protein (264 aa).

The disordered stretch occupies residues 57–264 (RPPASPCPPR…VYPHPHLTAT (208 aa)). The segment covering 140–153 (GKARRSPGRRRHPH) has biased composition (basic residues). Over residues 154–165 (SSFPQASSPSSP) the composition is skewed to low complexity.

This is an uncharacterized protein from Homo sapiens (Human).